Here is an 89-residue protein sequence, read N- to C-terminus: MAISKEKKDELIKEYARHDGDTGSPEVQIALLTSDINNLNDHLKANKQDHHSYVGLLKKIGHRRNLLRYLKNKDIQRYRELINKLGLRR.

This sequence belongs to the universal ribosomal protein uS15 family. As to quaternary structure, part of the 30S ribosomal subunit. Forms a bridge to the 50S subunit in the 70S ribosome, contacting the 23S rRNA.

In terms of biological role, one of the primary rRNA binding proteins, it binds directly to 16S rRNA where it helps nucleate assembly of the platform of the 30S subunit by binding and bridging several RNA helices of the 16S rRNA. Its function is as follows. Forms an intersubunit bridge (bridge B4) with the 23S rRNA of the 50S subunit in the ribosome. This chain is Small ribosomal subunit protein uS15, found in Lactobacillus johnsonii (strain CNCM I-12250 / La1 / NCC 533).